The sequence spans 292 residues: Ribosomal protein L11 methyltransferase (292 aa).

Positions 145, 166, 188, and 229 each coordinate S-adenosyl-L-methionine.

It belongs to the methyltransferase superfamily. PrmA family.

It is found in the cytoplasm. It carries out the reaction L-lysyl-[protein] + 3 S-adenosyl-L-methionine = N(6),N(6),N(6)-trimethyl-L-lysyl-[protein] + 3 S-adenosyl-L-homocysteine + 3 H(+). Functionally, methylates ribosomal protein L11. The protein is Ribosomal protein L11 methyltransferase of Nitrosococcus oceani (strain ATCC 19707 / BCRC 17464 / JCM 30415 / NCIMB 11848 / C-107).